A 298-amino-acid chain; its full sequence is N-acetylmuramic acid 6-phosphate etherase (298 aa).

The SIS domain maps to 55 to 218 (IHAQVSGGGR…STGLMIKSGK (164 aa)). The active-site Proton donor is the Glu-83. The active site involves Glu-114.

This sequence belongs to the GCKR-like family. MurNAc-6-P etherase subfamily. Homodimer.

It carries out the reaction N-acetyl-D-muramate 6-phosphate + H2O = N-acetyl-D-glucosamine 6-phosphate + (R)-lactate. It functions in the pathway amino-sugar metabolism; 1,6-anhydro-N-acetylmuramate degradation. The protein operates within amino-sugar metabolism; N-acetylmuramate degradation. It participates in cell wall biogenesis; peptidoglycan recycling. Specifically catalyzes the cleavage of the D-lactyl ether substituent of MurNAc 6-phosphate, producing GlcNAc 6-phosphate and D-lactate. Together with AnmK, is also required for the utilization of anhydro-N-acetylmuramic acid (anhMurNAc) either imported from the medium or derived from its own cell wall murein, and thus plays a role in cell wall recycling. The protein is N-acetylmuramic acid 6-phosphate etherase of Shigella dysenteriae serotype 1 (strain Sd197).